The following is a 190-amino-acid chain: Segregation and condensation protein B (190 aa).

This sequence belongs to the ScpB family. As to quaternary structure, homodimer. Homodimerization may be required to stabilize the binding of ScpA to the Smc head domains. Component of a cohesin-like complex composed of ScpA, ScpB and the Smc homodimer, in which ScpA and ScpB bind to the head domain of Smc. The presence of the three proteins is required for the association of the complex with DNA.

It is found in the cytoplasm. In terms of biological role, participates in chromosomal partition during cell division. May act via the formation of a condensin-like complex containing Smc and ScpA that pull DNA away from mid-cell into both cell halves. This is Segregation and condensation protein B from Bacillus cereus (strain B4264).